A 255-amino-acid polypeptide reads, in one-letter code: MAVGKNKRLSKGKKGLKKRVQDPFSRKDEYLVKAPSTFAVRDVGKTIVNRTTGLKNANDSLKGRIFEVSLADLQNDQAHSFRKIKLRVDEVQGKNCLTNFHGMDFTSDKLRSLVRKWQSLIEANVTVKTTDDYLVRLFAIAFTKRRSFQVKKTTYARSSQIRAIRKKMVEIIQREASSRTLTQLTKLVPEVIGREIEKATRGIYPLQNVHIRKVKLLKQPKFDLGGLLALHGEASTDDKGQKVEREFTEQVLESV.

Basic residues predominate over residues 1–18; the sequence is MAVGKNKRLSKGKKGLKK. Residues 1–20 are disordered; the sequence is MAVGKNKRLSKGKKGLKKRV. Alanine 2 carries the N-acetylalanine; partial modification.

It belongs to the eukaryotic ribosomal protein eS1 family. As to quaternary structure, component of the small ribosomal subunit. Mature ribosomes consist of a small (40S) and a large (60S) subunit. The 40S subunit contains about 33 different proteins and 1 molecule of RNA (18S). The 60S subunit contains about 49 different proteins and 3 molecules of RNA (25S, 5.8S and 5S).

It is found in the cytoplasm. This chain is Small ribosomal subunit protein eS1, found in Coccidioides immitis (strain RS) (Valley fever fungus).